We begin with the raw amino-acid sequence, 109 residues long: Prothymosin alpha (109 aa).

The segment at 1-109 (MSDTSVDASV…AKKQKTDDDD (109 aa)) is disordered. A compositionally biased stretch (basic and acidic residues) spans 9–35 (SVEKTTKDLKSKDKELVEETENGKDKP). A compositionally biased stretch (acidic residues) spans 41–81 (ENEENGEDGADNEEEEEVDEEDEEDEGEGDDDEGDEDDEAD). A compositionally biased stretch (basic and acidic residues) spans 99–109 (DAKKQKTDDDD).

This sequence belongs to the pro/parathymosin family. In terms of tissue distribution, highly expressed in the testis.

Its subcellular location is the nucleus. In terms of biological role, may have role in testicular activity. This Pelophylax lessonae (Pool frog) protein is Prothymosin alpha.